The chain runs to 241 residues: MRVVVSIGGSVLAPNLDARRVEDHAAVVETLAEAGYDIAAVVGGGGVARDYIGTARDLGANEVQLDQIGIDVTRINARLLIAALGSRVDPKVARDYEDAGDAVRRGDISIMGGIMPGQTTDAVAAALAEYVDADLLVYATSVDGVYDADPSSQDEAQKYTQLLPTELVDVVAPMSRDAGASAPVDLLAAKLIQRAGMRTIVLDGADPQHIESAVLDGEHNGTDIIPPDGKDDLATWVHAEQ.

Position 9 to 10 (9 to 10 (GS)) interacts with ATP. UMP is bound at residue Gly44. ATP-binding residues include Gly45 and Arg49. Residues Asp66 and 114–120 (IMPGQTT) contribute to the UMP site. 3 residues coordinate ATP: Thr140, Tyr146, and Asp149.

This sequence belongs to the UMP kinase family. In terms of assembly, homohexamer.

The protein localises to the cytoplasm. It carries out the reaction UMP + ATP = UDP + ADP. It participates in pyrimidine metabolism; CTP biosynthesis via de novo pathway; UDP from UMP (UMPK route): step 1/1. With respect to regulation, inhibited by UTP. Catalyzes the reversible phosphorylation of UMP to UDP. The protein is Uridylate kinase of Haloquadratum walsbyi (strain DSM 16790 / HBSQ001).